A 181-amino-acid polypeptide reads, in one-letter code: MEMEKRTPVLDGQGINTVLIRLAREIIQRHTNLEPLVIIGVHTRGVHLARRLADTIAEINGRAIPTGDIDITLYRDDWTKIGYSPVVQSTQIGFPIDDKTVILVDDVLFTGRTTRAALDALTDFGRPAKVELAVLVDREGMRELPIQADYVGMFVKTDKAEMVNVLLSETDGEDAVVVNTP.

Residues 101–113 carry the PRPP-binding motif; the sequence is VILVDDVLFTGRT.

This sequence belongs to the purine/pyrimidine phosphoribosyltransferase family. PyrR subfamily.

It carries out the reaction UMP + diphosphate = 5-phospho-alpha-D-ribose 1-diphosphate + uracil. In terms of biological role, regulates the transcription of the pyrimidine nucleotide (pyr) operon in response to exogenous pyrimidines. Functionally, also displays a weak uracil phosphoribosyltransferase activity which is not physiologically significant. In Desulfosudis oleivorans (strain DSM 6200 / JCM 39069 / Hxd3) (Desulfococcus oleovorans), this protein is Bifunctional protein PyrR.